The chain runs to 61 residues: Alpha-conotoxin CnIJ (61 aa).

A signal peptide spans 1 to 17; it reads MMFTVFLLVVLTTTVVS. A propeptide spanning residues 18–44 is cleaved from the precursor; that stretch reads FPSDSASDGRDDEAKDERSDMYELKRN. Cystine bridges form between cysteine 47–cysteine 52 and cysteine 48–cysteine 59. Residue cysteine 59 is modified to Cysteine amide.

This sequence belongs to the conotoxin A superfamily. Expressed by the venom duct.

It localises to the secreted. The protein is Alpha-conotoxin CnIJ of Conus consors (Singed cone).